The following is a 568-amino-acid chain: MSKKNSYDYVIIGGGSAGSVLGNRLTEDKDKEVLVLEAGRSDYPWDLFIQMPAALMFPSGNRFYDWIYQTEEEPHMGRKVDHARGKVLGGSSSINGMIYQRGNPMDYEGWAEPEGMESWDFAHCLPYFKRLEKTYGATPFDQFRGHHGPIKLKRGPATNPLFKSFFDAGVEAGYHKTKDVNGYRQEGFGPFDSQVHNGRRVSASRAYLHPAMKRKNLTVKTRAFVTKIHFDGNKATGVTFKRNGRYHTVDAGEVILSGGAFNTPQLLQLSGIGDAEFLKSKGIEPRMHLPGVGENFEDHLEVYIQHECKEPVSLQPSLDVKRMPWIGLQWIFARKGAAASNHFEGGAFVRSNNQVAYPNLMFHFLPIAVRYDGQKAPVAHGYQVHVGPMYSNSRGSLKIKSKDPFEKPSIVFNYLSTKEDEQEWVEAIRVARNILAQKAMDPYNGGEISPGPSVQTDEEILDWVRRDGETALHPSCSAKMGPASDPMSVVDPLTMKVHGMENLRVVDASAMPRTTNGNIHAPVLMLAEKAADIIRGKKPLEPQYVDYYKHGVSDENAGAMEFDPYYQH.

FAD is bound at residue 8-37 (DYVIIGGGSAGSVLGNRLTEDKDKEVLVLE). Catalysis depends on His-473, which acts as the Proton acceptor.

Belongs to the GMC oxidoreductase family. Requires FAD as cofactor.

The enzyme catalyses choline + A = betaine aldehyde + AH2. It catalyses the reaction betaine aldehyde + NAD(+) + H2O = glycine betaine + NADH + 2 H(+). It participates in amine and polyamine biosynthesis; betaine biosynthesis via choline pathway; betaine aldehyde from choline (cytochrome c reductase route): step 1/1. In terms of biological role, involved in the biosynthesis of the osmoprotectant glycine betaine. Catalyzes the oxidation of choline to betaine aldehyde and betaine aldehyde to glycine betaine at the same rate. This chain is Oxygen-dependent choline dehydrogenase, found in Staphylococcus haemolyticus (strain JCSC1435).